A 78-amino-acid chain; its full sequence is Large ribosomal subunit protein bL28 (78 aa).

It belongs to the bacterial ribosomal protein bL28 family.

This is Large ribosomal subunit protein bL28 from Glaesserella parasuis serovar 5 (strain SH0165) (Haemophilus parasuis).